Reading from the N-terminus, the 527-residue chain is Heat shock factor protein HSF8 (527 aa).

Positions 1 to 13 (MEPNSSGSGKAAV) are enriched in low complexity. Disordered regions lie at residues 1 to 37 (MEPN…PSAN), 130 to 160 (RRKP…HSAS), 243 to 275 (NESN…ADGQ), 300 to 343 (SPRL…TSGK), and 476 to 501 (QSPS…QING). Residues 25-37 (QPAPAPAPMPSAN) show a composition bias toward pro residues. Residues 39–133 (PPPFLVKTYD…LLKSISRRKP (95 aa)) mediate DNA binding. The segment covering 136–157 (GHAQQQQQPHGHAQQQMQPPGH) has biased composition (low complexity). 2 stretches are compositionally biased toward polar residues: residues 319–328 (SPQSNASSGR) and 491–501 (NTSETKPQING).

Belongs to the HSF family. As to quaternary structure, homotrimer. Exhibits temperature-dependent phosphorylation.

It localises to the nucleus. DNA-binding protein that specifically binds heat shock promoter elements (HSE) and activates transcription. The protein is Heat shock factor protein HSF8 (HSF8) of Solanum peruvianum (Peruvian tomato).